A 125-amino-acid polypeptide reads, in one-letter code: Large ribosomal subunit protein bL12 (125 aa).

This sequence belongs to the bacterial ribosomal protein bL12 family. Homodimer. Part of the ribosomal stalk of the 50S ribosomal subunit. Forms a multimeric L10(L12)X complex, where L10 forms an elongated spine to which 2 to 4 L12 dimers bind in a sequential fashion. Binds GTP-bound translation factors.

In terms of biological role, forms part of the ribosomal stalk which helps the ribosome interact with GTP-bound translation factors. Is thus essential for accurate translation. In Francisella tularensis subsp. holarctica (strain FTNF002-00 / FTA), this protein is Large ribosomal subunit protein bL12.